The sequence spans 640 residues: Threonine--tRNA ligase (640 aa).

Residues Asp224–Pro525 are catalytic. Zn(2+)-binding residues include Cys323, His374, and His502.

Belongs to the class-II aminoacyl-tRNA synthetase family. As to quaternary structure, homodimer. Requires Zn(2+) as cofactor.

It localises to the cytoplasm. The catalysed reaction is tRNA(Thr) + L-threonine + ATP = L-threonyl-tRNA(Thr) + AMP + diphosphate + H(+). In terms of biological role, catalyzes the attachment of threonine to tRNA(Thr) in a two-step reaction: L-threonine is first activated by ATP to form Thr-AMP and then transferred to the acceptor end of tRNA(Thr). Also edits incorrectly charged L-seryl-tRNA(Thr). This Tropheryma whipplei (strain Twist) (Whipple's bacillus) protein is Threonine--tRNA ligase.